The primary structure comprises 609 residues: Protein KINESIN LIGHT CHAIN-RELATED 1 (609 aa).

The disordered stretch occupies residues 1–77 (MPAMPGLVSV…TAAVIDVDDP (77 aa)). Low complexity predominate over residues 38-55 (KKTPSSTPSRSKPSPNRS). TPR repeat units lie at residues 140–173 (AMSL…PDPT), 183–216 (FSGH…QIQT), 225–258 (GETC…HRAH), 267–301 (AADR…IASG), 307–340 (ASID…FKAS), 349–382 (ASVF…YNKP), 392–425 (AGGL…LEDK), 433–466 (AGLE…LRAA), 474–507 (GVVL…LEQE), and 516–549 (LGVY…REEK). Positions 582-609 (LQNLIDPNARPPKKESSAKKWPSLGFKF) are disordered.

This sequence belongs to the kinesin light chain family. In terms of assembly, interacts with IQD1.

It is found in the cytoplasm. It localises to the cytoskeleton. The protein is Protein KINESIN LIGHT CHAIN-RELATED 1 of Arabidopsis thaliana (Mouse-ear cress).